A 699-amino-acid chain; its full sequence is Kinesin-II 85 kDa subunit (699 aa).

In terms of domain architecture, Kinesin motor spans 10–342 (NVRVVVRCRP…LRYANRAKNI (333 aa)). 97–104 (GQTGTGKT) contacts ATP. The stretch at 341-619 (NIKNKAKINE…EDIGEWQLKC (279 aa)) forms a coiled coil. 3 disordered regions span residues 369 to 415 (KQIS…LSPE), 432 to 456 (EEKK…ESEL), and 660 to 699 (GMKY…ALLQ). Positions 376 to 395 (EGLDDDEESGSEESGDEEAG) are enriched in acidic residues. Residues 400–411 (KKKRKGKNPKRK) show a composition bias toward basic residues. The interval 620–699 (VAYTGNNMRK…MASSIDALLQ (80 aa)) is globular. Over residues 667 to 679 (QGKSGRPKTSSGR) the composition is skewed to polar residues.

This sequence belongs to the TRAFAC class myosin-kinesin ATPase superfamily. Kinesin family. Kinesin II subfamily. Heterotrimer of a 115 kDa subunit (KAP115) and two kinesin-like subunits of 95 kDa (KRP95) and 85 kDa (KRP85). The N-terminus is blocked.

Its subcellular location is the cytoplasm. It localises to the cytoskeleton. The sequence is that of Kinesin-II 85 kDa subunit (KRP85) from Strongylocentrotus purpuratus (Purple sea urchin).